The following is a 126-amino-acid chain: Large ribosomal subunit protein bL17c (126 aa).

The transit peptide at 1-10 (MIDNGGRFFA) directs the protein to the chloroplast.

Component of the chloroplast large ribosomal subunit (LSU). Mature 70S chloroplast ribosomes of higher plants consist of a small (30S) and a large (50S) subunit. The 30S small subunit contains 1 molecule of ribosomal RNA (16S rRNA) and 24 different proteins. The 50S large subunit contains 3 rRNA molecules (23S, 5S and 4.5S rRNA) and 33 different proteins.

It localises to the plastid. It is found in the chloroplast. Component of the chloroplast ribosome (chloro-ribosome), a dedicated translation machinery responsible for the synthesis of chloroplast genome-encoded proteins, including proteins of the transcription and translation machinery and components of the photosynthetic apparatus. The polypeptide is Large ribosomal subunit protein bL17c (RPL17) (Spinacia oleracea (Spinach)).